A 417-amino-acid polypeptide reads, in one-letter code: Caveolae-associated protein 2 (417 aa).

Residues 1 to 42 (MGEDAAQAEKFQHPNTDMLQEKPSNPSPMPSSTPSPSLNLGS) are disordered. Glycine 2 carries the N-acetylglycine modification. The tract at residues 2–168 (GEDAAQAEKF…IFQEESEIPA (167 aa)) is interaction with CAVIN1. Phosphoserine is present on residues serine 27, serine 35, serine 37, and serine 51. 2 coiled-coil regions span residues 61-87 (LLDK…INLE) and 126-267 (RAVR…VERR). Residues 62-100 (LDKLVNMLDAVRENQHNMEQRQINLEGSVKGIQNDLTKL) are leucine-zipper. Position 195 is a phosphothreonine (threonine 195). Disordered regions lie at residues 198–242 (NVDL…DSLK) and 256–381 (KLGT…ALQQ). Residues serine 202, serine 203, and serine 217 each carry the phosphoserine modification. The segment covering 202–218 (SSDDELPGDEEALEDSA) has biased composition (acidic residues). Over residues 219 to 242 (EEKMEESRAEKIKRSSLKKVDSLK) the composition is skewed to basic and acidic residues. Positions 274–286 (LTPNHQKASSGKS) are enriched in polar residues. Phosphoserine occurs at positions 282, 283, 286, 287, 292, and 295. The span at 302–320 (REGESSAENETKLEEQVQD) shows a compositional bias: basic and acidic residues. Phosphoserine occurs at positions 326, 335, 358, and 362. The segment covering 354-365 (RGNNSGVGSNAD) has biased composition (polar residues). A Phosphothreonine modification is found at threonine 367. Residues 367-376 (TIEEDEEEES) are compositionally biased toward acidic residues. Phosphotyrosine is present on tyrosine 387. A phosphoserine mark is found at serine 389 and serine 395.

This sequence belongs to the CAVIN family. Component of the CAVIN complex composed of CAVIN1, CAVIN2, CAVIN3 and CAVIN. Interacts with CAVIN4; this augments the transactivation of NPPA by CAVIN4. Binds to PRKCA in the presence of phosphatidylserine. Interacts with CAVIN1 and CAV3. In terms of processing, the N-terminus is blocked. Post-translationally, phosphorylated on Ser residues.

The protein localises to the cytoplasm. Its subcellular location is the cytosol. It localises to the membrane. The protein resides in the caveola. Functionally, plays an important role in caveolar biogenesis and morphology. Regulates caveolae morphology by inducing membrane curvature within caveolae. Plays a role in caveola formation in a tissue-specific manner. Required for the formation of caveolae in the lung and fat endothelia but not in the heart endothelia. Negatively regulates the size or stability of CAVIN complexes in the lung endothelial cells. May play a role in targeting PRKCA to caveolae. This Rattus norvegicus (Rat) protein is Caveolae-associated protein 2.